The following is a 465-amino-acid chain: Transcriptional protein swt1 (465 aa).

The region spanning Gly-70 to Ile-190 is the PINc domain.

Belongs to the SWT1 family.

It localises to the cytoplasm. It is found in the nucleus. Involved in transcription. The polypeptide is Transcriptional protein swt1 (Schizosaccharomyces pombe (strain 972 / ATCC 24843) (Fission yeast)).